Consider the following 507-residue polypeptide: Serine/threonine-protein kinase CBK1 (507 aa).

The interval 1 to 30 (MQKVSGSGKKTTAFQQRKSDSVYNNNEMNK) is disordered. Positions 126–431 (FHTVKVIGKG…ANDIKLHPFF (306 aa)) constitute a Protein kinase domain. ATP-binding positions include 132 to 140 (IGKGAFGEV) and lysine 155. Aspartate 249 (proton acceptor) is an active-site residue. The region spanning 432–505 (RGVNWDTIRE…KRFDMMTQKG (74 aa)) is the AGC-kinase C-terminal domain.

The protein belongs to the protein kinase superfamily. STE Ser/Thr protein kinase family. COT1 subfamily.

It catalyses the reaction L-seryl-[protein] + ATP = O-phospho-L-seryl-[protein] + ADP + H(+). The catalysed reaction is L-threonyl-[protein] + ATP = O-phospho-L-threonyl-[protein] + ADP + H(+). Protein kinase that seems to play a role in signaling pathways necessary for cell growth and mating. This is Serine/threonine-protein kinase CBK1 (CBK1) from Pneumocystis carinii.